We begin with the raw amino-acid sequence, 476 residues long: Probable cytosolic Fe-S cluster assembly factor GI11683 (476 aa).

[4Fe-4S] cluster-binding residues include Cys23, Cys68, Cys71, Cys74, Cys187, Cys243, Cys395, and Cys399.

The protein belongs to the NARF family.

Component of the cytosolic iron-sulfur (Fe/S) protein assembly machinery. Required for maturation of extramitochondrial Fe/S proteins. The chain is Probable cytosolic Fe-S cluster assembly factor GI11683 from Drosophila mojavensis (Fruit fly).